Reading from the N-terminus, the 292-residue chain is uncharacterized protein (292 aa).

A run of 10 helical transmembrane segments spans residues 6 to 26 (LGII…KVGI), 32 to 52 (LLFS…ILFI), 68 to 88 (IIMS…GMQF), 94 to 114 (TSVL…FSLN), 123 to 143 (MGLV…MLNI), 147 to 167 (ALFG…ANVF), 182 to 202 (AWHL…FEAV), 214 to 234 (SLLF…FWVL), 242 to 262 (ASMA…LQLH), and 265 to 285 (ITIN…MNTF). EamA domains lie at 13 to 137 (LIWG…FIFG) and 159 to 285 (LSWG…MNTF).

It belongs to the EamA transporter family.

The protein localises to the cell membrane. This is an uncharacterized protein from Bacillus subtilis (strain 168).